A 427-amino-acid polypeptide reads, in one-letter code: Serine--tRNA ligase (427 aa).

232 to 234 (TAE) contributes to the L-serine binding site. 263 to 265 (RSE) provides a ligand contact to ATP. Residue Glu-286 coordinates L-serine. 350 to 353 (EISS) is a binding site for ATP. Position 385 (Ser-385) interacts with L-serine.

It belongs to the class-II aminoacyl-tRNA synthetase family. Type-1 seryl-tRNA synthetase subfamily. In terms of assembly, homodimer. The tRNA molecule binds across the dimer.

It is found in the cytoplasm. The enzyme catalyses tRNA(Ser) + L-serine + ATP = L-seryl-tRNA(Ser) + AMP + diphosphate + H(+). The catalysed reaction is tRNA(Sec) + L-serine + ATP = L-seryl-tRNA(Sec) + AMP + diphosphate + H(+). It participates in aminoacyl-tRNA biosynthesis; selenocysteinyl-tRNA(Sec) biosynthesis; L-seryl-tRNA(Sec) from L-serine and tRNA(Sec): step 1/1. In terms of biological role, catalyzes the attachment of serine to tRNA(Ser). Is also able to aminoacylate tRNA(Sec) with serine, to form the misacylated tRNA L-seryl-tRNA(Sec), which will be further converted into selenocysteinyl-tRNA(Sec). This is Serine--tRNA ligase from Lacticaseibacillus paracasei (strain ATCC 334 / BCRC 17002 / CCUG 31169 / CIP 107868 / KCTC 3260 / NRRL B-441) (Lactobacillus paracasei).